The chain runs to 102 residues: Small ribosomal subunit protein uS14 (102 aa).

It belongs to the universal ribosomal protein uS14 family. In terms of assembly, part of the 30S ribosomal subunit. Contacts proteins S3 and S10.

Functionally, binds 16S rRNA, required for the assembly of 30S particles and may also be responsible for determining the conformation of the 16S rRNA at the A site. The protein is Small ribosomal subunit protein uS14 of Wolbachia sp. subsp. Brugia malayi (strain TRS).